The sequence spans 1005 residues: Band 4.1-like protein 2 (1005 aa).

Residues 1 to 80 (MTTEVGSVSE…SRGISRFIPP (80 aa)) are disordered. Position 2 is an N-acetylthreonine (Thr2). Ser7 bears the Phosphoserine mark. Basic and acidic residues predominate over residues 22 to 31 (ATKEKPKEVA). Ser39, Ser58, and Ser87 each carry phosphoserine. At Thr89 the chain carries Phosphothreonine. The disordered stretch occupies residues 93–196 (AKDGGDKKEP…GGAAKRETKE (104 aa)). Basic and acidic residues-rich tracts occupy residues 111–157 (VLDK…EKPS) and 169–196 (VSKE…ETKE). Glycyl lysine isopeptide (Lys-Gly) (interchain with G-Cter in SUMO2) cross-links involve residues Lys140 and Lys144. A phosphoserine mark is found at Ser170, Ser208, Ser386, Ser402, Ser499, Ser550, Ser562, Ser575, Ser598, and Ser614. Residues 218–499 (VQCKVTLLDG…EHHTFYRLVS (282 aa)) enclose the FERM domain. The segment at 502–610 (QPPKAKFLTL…KAPHLQLIEG (109 aa)) is hydrophilic. Residues 611-676 (KKNSLRVEGD…WEKRRITPLS (66 aa)) form a spectrin--actin-binding region. Tyr623 is subject to Phosphotyrosine. A phosphoserine mark is found at Ser627 and Ser647. Residues 652–800 (KRNFMESTPE…EEAVPEASPV (149 aa)) are disordered. The segment covering 675-686 (LSLQTQGSSHET) has biased composition (polar residues). Residues 690 to 711 (VEEKKRAEVGKDERVITEEMNG) are compositionally biased toward basic and acidic residues. 2 positions are modified to phosphoserine: Ser715 and Ser718. A compositionally biased stretch (low complexity) spans 734–746 (STSLSSESSSSSS). Basic and acidic residues-rich tracts occupy residues 754-770 (GEYR…IREE) and 780-793 (EPRP…REEA). A Phosphothreonine modification is found at Thr763. Ser828 bears the Phosphoserine mark. Residues 855-1005 (HVDIDVLPQI…ETELAEEGED (151 aa)) are C-terminal (CTD).

Interacts with FCGR1A. Interacts with TRPC4. Interacts (via CTD domain) with FKBP2. Interacts with NUMA1; this interaction is negatively regulated by CDK1 during metaphase and promotes anaphase-specific localization of NUMA1 in symmetrically dividing cells. In terms of tissue distribution, widely expressed.

It localises to the cytoplasm. It is found in the cytoskeleton. Its subcellular location is the cell cortex. The protein localises to the cell membrane. Its function is as follows. Required for dynein-dynactin complex and NUMA1 recruitment at the mitotic cell cortex during anaphase. This is Band 4.1-like protein 2 from Homo sapiens (Human).